The primary structure comprises 235 residues: MDRPVIVALDLDNEEQLNKILSKLGDPHDVFVKVGMELFYNAGIDVIKKLTQQGYKIFLDLKMHDIPNTVYNGAKALAKLGITFTTVHALGGSQMIKSAKDGLIAGTPAGHSVPKLLAVTELTSISDDVLRNEQNCRLPMAEQVLSLAKMAKHSGADGVICSPLEVKKLHENIGDDFLYVTPGIRPAGNAKDDQSRVATPKMAKEWGSSAIVVGRPITLASDPKAAYEAIKKEFN.

Residues aspartate 10, lysine 33, 60–69 (DLKMHDIPNT), threonine 123, arginine 185, glutamine 194, glycine 214, and arginine 215 each bind substrate. The active-site Proton donor is lysine 62.

This sequence belongs to the OMP decarboxylase family. Type 1 subfamily. In terms of assembly, homodimer.

The enzyme catalyses orotidine 5'-phosphate + H(+) = UMP + CO2. The protein operates within pyrimidine metabolism; UMP biosynthesis via de novo pathway; UMP from orotate: step 2/2. Functionally, catalyzes the decarboxylation of orotidine 5'-monophosphate (OMP) to uridine 5'-monophosphate (UMP). In Lactobacillus acidophilus (strain ATCC 700396 / NCK56 / N2 / NCFM), this protein is Orotidine 5'-phosphate decarboxylase.